A 665-amino-acid polypeptide reads, in one-letter code: Protein-arginine deiminase type-2 (665 aa).

Ca(2+)-binding residues include Asp123, Asp125, Asp127, Glu131, Asn154, Asp156, Asp158, Asp166, Asp169, Lys171, Asp177, Asp180, Glu354, Asp389, Phe408, Leu411, and Glu412. Cys647 (nucleophile) is an active-site residue.

The protein belongs to the protein arginine deiminase family. Homodimer. Ca(2+) is required as a cofactor. In terms of tissue distribution, spinal cord, submaxillary gland, cerebrum, cerebellum, and skeletal muscle.

The protein localises to the cytoplasm. The catalysed reaction is L-arginyl-[protein] + H2O = L-citrullyl-[protein] + NH4(+). Catalyzes the deimination of arginine residues of proteins. In Rattus norvegicus (Rat), this protein is Protein-arginine deiminase type-2 (Padi2).